The following is a 1363-amino-acid chain: MFLILLISLPMAFAVIGDLKCTTVSINDVDTGAPSISTDTVDVTNGLGTYYVLDRVYLNTTLLLNGYYPTSGSTYRNMALKGTLLLSRLWFKPPFLSDFINGIFAKVKNTKVIKKGVMYSEFPAITIGSTFVNTSYSVVVQPHTTNLDNKLQGLLEISVCQYTMCEYPHTICHPNLGNQRVELWHWDTGVVSCLYKRNFTYDVNADYLYFHFYQEGGTFYAYFTDTGVVTKFLFNVYLGTVLSHYYVLPLTCYSAMTLEYWVTPLTSKQYLLAFNQDGVIFNAVDCKSDFMSEIKCKTLSIAPSTGVYELNGYTVQPIADVYRRIPNLPDCNIEAWLNDKSVPSPLNWERKTFSNCNFNMSSLMSFIQADSFTCNNIEAAKIYGMCFSSITIDKFAIPNGRKVDLQLGNLGYLQSFNYRIDTTAASCQLYYNLPAANVSVSRFNPSTWNRRFGFTEQSVFKPQPVGVFTHHDVVYAQHCFKAPTNFCPCKLDGSLCVGNGPGIDAGYKNSGIGTCPAGTNYLTCHNAAQCDCLCTPDPITSKSTGPYKCPQTKYLVGIGEHCSGLAIKSDYCGGNPCTCQPQAFLGWSVDSCLQGDRCNIFANFILHDVNSGTTCSTDLQKSNTDIILGVCVNYDLYGITGQGIFVEVNATYYNSWQNLLYDSNGNLYGFRDYLTNRTFMIRSCYSGRVSAAFHANSSEPALLFRNIKCNYVFNNTLSRQLQPINYFDSYLGCVVNADNSTSSVVQTCDLTVGSGYCVDYSTKRRSRRAITTGYRFTNFEPFTVNSVNDSLEPVGGLYEIQIPSEFTIGNMEEFIQTSSPKVTIDCSAFVCGDYAACKSQLVEYGSFCDNINAILTEVNELLDTTQLQVANSLMNGVTLSTKLKDGVNFNVDDINFSPVLGCLGSDCNKVSSRSAIEDLLFSKVKLSDVGFVEAYNNCTGGAEIRDLICVQSYNGIKVLPPLLSVNQISGYTLAATSASLFPPWSAAAGVPFYLNVQYRINGIGVTMDVLSQNQKLIANAFNNALDAIQEGFDATNSALVKIQAVVNANAEALNNLLQQLSNRFGAISSSLQEILSRLDALEAQAQIDRLINGRLTALNAYVSQQLSDSTLVKFSAAQAMEKVNECVKSQSSRINFCGNGNHIISLVQNAPYGLYFIHFSYVPTKYVTAKVSPGLCIAGDRGIAPKSGYFVNVNNTWMFTGSGYYYPEPITGNNVVVMSTCAVNYTKAPDVMLNISTPNLHDFKEELDQWFKNQTSVAPDLSLDYINVTFLDLQDEMNRLQEAIKVLNQSYINLKDIGTYEYYVKWPWYVWLLIGFAGVAMLVLLFFICCCTGCGTSCFKICGGCCDDYTGHQELVIKTSHDD.

Residues 1 to 13 form the signal peptide; that stretch reads MFLILLISLPMAF. Over 14–1307 the chain is Extracellular; it reads AVIGDLKCTT…GTYEYYVKWP (1294 aa). Residues 15-298 form the BetaCoV S1-NTD domain; sequence VIGDLKCTTV…DFMSEIKCKT (284 aa). Intrachain disulfides connect cysteine 21-cysteine 165, cysteine 160-cysteine 193, cysteine 172-cysteine 252, cysteine 286-cysteine 296, and cysteine 331-cysteine 356. N-linked (GlcNAc...) asparagine; by host glycosylation is found at asparagine 59 and asparagine 133. Asparagine 198 carries an N-linked (GlcNAc...) asparagine; by host glycan. One can recognise a BetaCoV S1-CTD domain in the interval 329–617; the sequence is PDCNIEAWLN…DVNSGTTCST (289 aa). Residue asparagine 359 is glycosylated (N-linked (GlcNAc...) asparagine; by host). 2 disulfide bridges follow: cysteine 374–cysteine 427 and cysteine 386–cysteine 615. N-linked (GlcNAc...) asparagine; by host glycosylation is found at asparagine 437, asparagine 649, asparagine 676, asparagine 696, asparagine 714, asparagine 739, and asparagine 788. Fusion peptide stretches follow at residues 914 to 935 and 933 to 953; these read SAIE…VEAY and EAYN…VQSY. Asparagine 937 is a glycosylation site (N-linked (GlcNAc...) asparagine; by host). Cysteine 938 and cysteine 949 are disulfide-bonded. The tract at residues 1014–1064 is heptad repeat 1; sequence QKLIANAFNNALDAIQEGFDATNSALVKIQAVVNANAEALNNLLQQLSNRF. Residues 1043-1087 are a coiled coil; the sequence is QAVVNANAEALNNLLQQLSNRFGAISSSLQEILSRLDALEAQAQI. N-linked (GlcNAc...) asparagine; by host glycans are attached at residues asparagine 1194, asparagine 1224, asparagine 1234, asparagine 1253, asparagine 1267, and asparagine 1288. The tract at residues 1258–1296 is heptad repeat 2; sequence APDLSLDYINVTFLDLQDEMNRLQEAIKVLNQSYINLKD. Positions 1269-1297 form a coiled coil; the sequence is TFLDLQDEMNRLQEAIKVLNQSYINLKDI. Residues 1308 to 1328 form a helical membrane-spanning segment; sequence WYVWLLIGFAGVAMLVLLFFI. Residues 1329 to 1363 are Cytoplasmic-facing; that stretch reads CCCTGCGTSCFKICGGCCDDYTGHQELVIKTSHDD. A KxHxx motif is present at residues 1359–1363; that stretch reads TSHDD.

The protein belongs to the betacoronaviruses spike protein family. Homotrimer; each monomer consists of a S1 and a S2 subunit. The resulting peplomers protrude from the virus surface as spikes. Post-translationally, specific enzymatic cleavages in vivo yield mature proteins. The precursor is processed into S1 and S2 by host cell furin or another cellular protease to yield the mature S1 and S2 proteins. Additionally, a second cleavage leads to the release of a fusion peptide after viral attachment to host cell receptor. The cytoplasmic Cys-rich domain is palmitoylated. Spike glycoprotein is digested within host endosomes.

It is found in the virion membrane. It localises to the host endoplasmic reticulum-Golgi intermediate compartment membrane. The protein resides in the host cell membrane. In terms of biological role, attaches the virion to the cell membrane by interacting with host receptor, initiating the infection. Functionally, mediates fusion of the virion and cellular membranes by acting as a class I viral fusion protein. Under the current model, the protein has at least three conformational states: pre-fusion native state, pre-hairpin intermediate state, and post-fusion hairpin state. During viral and target cell membrane fusion, the coiled coil regions (heptad repeats) assume a trimer-of-hairpins structure, positioning the fusion peptide in close proximity to the C-terminal region of the ectodomain. The formation of this structure appears to drive apposition and subsequent fusion of viral and target cell membranes. Its function is as follows. Acts as a viral fusion peptide which is unmasked following S2 cleavage occurring upon virus endocytosis. This chain is Spike glycoprotein, found in Bovine coronavirus (strain vaccine) (BCoV).